Here is a 364-residue protein sequence, read N- to C-terminus: Methylthioribose-1-phosphate isomerase (364 aa).

The active-site Proton donor is the aspartate 246.

It belongs to the eIF-2B alpha/beta/delta subunits family. MtnA subfamily.

It is found in the cytoplasm. The protein localises to the nucleus. It catalyses the reaction 5-(methylsulfanyl)-alpha-D-ribose 1-phosphate = 5-(methylsulfanyl)-D-ribulose 1-phosphate. The protein operates within amino-acid biosynthesis; L-methionine biosynthesis via salvage pathway; L-methionine from S-methyl-5-thio-alpha-D-ribose 1-phosphate: step 1/6. Catalyzes the interconversion of methylthioribose-1-phosphate (MTR-1-P) into methylthioribulose-1-phosphate (MTRu-1-P). This Bombyx mori (Silk moth) protein is Methylthioribose-1-phosphate isomerase.